A 143-amino-acid polypeptide reads, in one-letter code: Large ribosomal subunit protein mL51 (143 aa).

The N-terminal 52 residues, 1 to 52, are a transit peptide targeting the mitochondrion; it reads MAALVRGLMRRVAALPQAVRSVSGGGQRHEPYRPLPITSPLAGLPRNFRVRE.

Belongs to the mitochondrion-specific ribosomal protein mL51 family. In terms of assembly, component of the mitochondrial ribosome large subunit (39S) which comprises a 16S rRNA and about 50 distinct proteins.

It is found in the mitochondrion. This Gallus gallus (Chicken) protein is Large ribosomal subunit protein mL51 (MRPL51).